Reading from the N-terminus, the 141-residue chain is Hemoglobin subunit alpha-1 (141 aa).

A Globin domain is found at 1–141; that stretch reads VLSPADKNNV…VSTVLTSKYR (141 aa). H58 is an O2 binding site. A heme b-binding site is contributed by H87.

The protein belongs to the globin family. As to quaternary structure, heterotetramer of two alpha chains and two beta chains. In terms of tissue distribution, red blood cells.

Its function is as follows. Involved in oxygen transport from the lung to the various peripheral tissues. The chain is Hemoglobin subunit alpha-1 from Varecia variegata (Black-and-white ruffed lemur).